The primary structure comprises 303 residues: Monoglyceride lipase (303 aa).

Threonine 10 carries the post-translational modification Phosphothreonine. Tyrosine 58 is modified (3'-nitrotyrosine). The Nucleophile role is filled by serine 122. Serine 189 is modified (phosphoserine). Residues aspartate 239 and histidine 269 each act as charge relay system in the active site.

This sequence belongs to the AB hydrolase superfamily. Monoacylglycerol lipase family. In terms of assembly, homodimer. Ubiquitous.

It is found in the cytoplasm. The protein localises to the cytosol. Its subcellular location is the membrane. The catalysed reaction is Hydrolyzes glycerol monoesters of long-chain fatty acids.. It catalyses the reaction a 1-acylglycerol + H2O = glycerol + a fatty acid + H(+). The enzyme catalyses a 2-acylglycerol + H2O = glycerol + a fatty acid + H(+). It carries out the reaction 2-(5Z,8Z,11Z,14Z-eicosatetraenoyl)-glycerol + H2O = glycerol + (5Z,8Z,11Z,14Z)-eicosatetraenoate + H(+). The catalysed reaction is 1-octanoylglycerol + H2O = octanoate + glycerol + H(+). It catalyses the reaction 1-decanoylglycerol + H2O = decanoate + glycerol + H(+). The enzyme catalyses 1-dodecanoylglycerol + H2O = dodecanoate + glycerol + H(+). It carries out the reaction 1-tetradecanoylglycerol + H2O = tetradecanoate + glycerol + H(+). The catalysed reaction is 2-hexadecanoylglycerol + H2O = glycerol + hexadecanoate + H(+). It catalyses the reaction 1-(9Z-octadecenoyl)-glycerol + H2O = glycerol + (9Z)-octadecenoate + H(+). The enzyme catalyses 2-(9Z-octadecenoyl)-glycerol + H2O = glycerol + (9Z)-octadecenoate + H(+). It carries out the reaction 2-(9Z,12Z-octadecadienoyl)-glycerol + H2O = (9Z,12Z)-octadecadienoate + glycerol + H(+). The catalysed reaction is 1-(5Z,8Z,11Z,14Z-eicosatetraenoyl)-glycerol + H2O = glycerol + (5Z,8Z,11Z,14Z)-eicosatetraenoate + H(+). It catalyses the reaction 1-(9Z,12Z-octadecadienoyl)-glycerol + H2O = (9Z,12Z)-octadecadienoate + glycerol + H(+). The enzyme catalyses 1-hexadecanoylglycerol + H2O = glycerol + hexadecanoate + H(+). It carries out the reaction 1-octadecanoylglycerol + H2O = octadecanoate + glycerol + H(+). The catalysed reaction is prostaglandin E2 1-glyceryl ester + H2O = prostaglandin E2 + glycerol + H(+). It catalyses the reaction prostaglandin D2-1-glycerol ester + H2O = prostaglandin D2 + glycerol + H(+). The enzyme catalyses 2-glyceryl-15-deoxy-Delta(12,14)-prostaglandin J2 + H2O = 15-deoxy-Delta(12,14)-prostaglandin J2 + glycerol + H(+). It carries out the reaction prostaglandin F2alpha 1-glyceryl ester + H2O = prostaglandin F2alpha + glycerol + H(+). It participates in glycerolipid metabolism; triacylglycerol degradation. Functionally, converts monoacylglycerides to free fatty acids and glycerol. Hydrolyzes the endocannabinoid 2-arachidonoylglycerol, and thereby contributes to the regulation of endocannabinoid signaling, nociperception and perception of pain. Regulates the levels of fatty acids that serve as signaling molecules and promote cancer cell migration, invasion and tumor growth. This is Monoglyceride lipase from Mus musculus (Mouse).